A 108-amino-acid polypeptide reads, in one-letter code: Protein SMALL AUXIN UP-REGULATED RNA 8 (108 aa).

It belongs to the ARG7 family. Expressed in seedlings, leaves and flowers.

The protein resides in the cell membrane. In terms of biological role, provide a mechanistic link between auxin and plasma membrane H(+)-ATPases (PM H(+)-ATPases, e.g. AHA1 and AHA2), and triggers PM H(+)-ATPases activity by promoting phosphorylation of their C-terminal autoinhibitory domain as a result of PP2C-D subfamily of type 2C phosphatases inhibition, thus leading to the acidification of the apoplast and the facilitation of solutes and water uptake to drive cell expansion. Triggers plant growth probably by promoting cell elongation. Regulates branch angles and bending. In Arabidopsis thaliana (Mouse-ear cress), this protein is Protein SMALL AUXIN UP-REGULATED RNA 8.